Here is a 177-residue protein sequence, read N- to C-terminus: Parathyroid hormone-related protein (177 aa).

The N-terminal stretch at 1 to 24 (MLWRLVQQWSVAVFLLSYSVPSCG) is a signal peptide. Residues 25-34 (RSVEELGRRL) constitute a propeptide that is removed on maturation. The segment at 57-68 (RFFLHHLIAEIH) is important for receptor binding. Residues 74–149 (ATSEVSPNSK…KRRTRSAWLT (76 aa)) are disordered. Residues 76 to 90 (SEVSPNSKPAPNTKN) are compositionally biased toward polar residues. A Nuclear localization signal motif is present at residues 108–129 (TNKVETYKEQPLKTPGKKKKSK). Residues 109–118 (NKVETYKEQP) are compositionally biased toward basic and acidic residues. The segment covering 122–132 (PGKKKKSKPGK) has biased composition (basic residues).

It belongs to the parathyroid hormone family. As to quaternary structure, PTHrP interacts with PTH1R (via N-terminal extracellular domain). In terms of processing, there are several secretory forms, including osteostatin, arising from endoproteolytic cleavage of the initial translation product. Each of these secretory forms is believed to have one or more of its own receptors that mediates the normal paracrine, autocrine and endocrine actions.

It localises to the secreted. The protein resides in the cytoplasm. The protein localises to the nucleus. In terms of biological role, neuroendocrine peptide which is a critical regulator of cellular and organ growth, development, migration, differentiation and survival and of epithelial calcium ion transport. Acts by binding to its receptor, PTH1R, activating G protein-coupled receptor signaling. Regulates endochondral bone development and epithelial-mesenchymal interactions during the formation of the mammary glands and teeth. Required for skeletal homeostasis. Promotes mammary mesenchyme differentiation and bud outgrowth by modulating mesenchymal cell responsiveness to BMPs. Up-regulates BMPR1A expression in the mammary mesenchyme and this increases the sensitivity of these cells to BMPs and allows them to respond to BMP4 in a paracrine and/or autocrine fashion. BMP4 signaling in the mesenchyme, in turn, triggers epithelial outgrowth and augments MSX2 expression, which causes the mammary mesenchyme to inhibit hair follicle formation within the nipple sheath. Functionally, potent inhibitor of osteoclastic bone resorption. This chain is Parathyroid hormone-related protein (PTHLH), found in Bos taurus (Bovine).